A 127-amino-acid polypeptide reads, in one-letter code: Small ribosomal subunit protein uS11 (127 aa).

It belongs to the universal ribosomal protein uS11 family. As to quaternary structure, part of the 30S ribosomal subunit. Interacts with proteins S7 and S18. Binds to IF-3.

Located on the platform of the 30S subunit, it bridges several disparate RNA helices of the 16S rRNA. Forms part of the Shine-Dalgarno cleft in the 70S ribosome. The sequence is that of Small ribosomal subunit protein uS11 from Ehrlichia ruminantium (strain Gardel).